Consider the following 361-residue polypeptide: Mitochondrial fission regulator 2 (361 aa).

Position 137 is a phosphoserine (serine 137). Disordered stretches follow at residues 191 to 286 (FIDL…VPNM) and 298 to 322 (LRPVERSPGGRPVQKRKRRSSEWDP). The segment covering 219–231 (VLPPPPPPPPPPQ) has biased composition (pro residues). Residues 232–244 (FSLQPPSSLPMQP) are compositionally biased toward low complexity. A compositionally biased stretch (basic and acidic residues) spans 250–282 (HDIDSLATEMERQLSGVKKTDDSHHSKSQRLRD). A phosphoserine mark is found at serine 304 and serine 340.

It belongs to the MTFR1 family. Expressed predominantly in testis (at protein level). Expressed to a lower extent in spleen.

The protein resides in the mitochondrion. Its function is as follows. May play a role in mitochondrial aerobic respiration essentially in the testis. Can also promote mitochondrial fission. This Mus musculus (Mouse) protein is Mitochondrial fission regulator 2 (Mtfr2).